A 209-amino-acid chain; its full sequence is DNA transformation protein TfoX1 (209 aa).

This sequence belongs to the Sxy/TfoX family.

Required for DNA transformation jointly with TfoY (tfoX2). The chain is DNA transformation protein TfoX1 from Aliivibrio fischeri (strain ATCC 700601 / ES114) (Vibrio fischeri).